The sequence spans 516 residues: Serine carboxypeptidase-like 49 (516 aa).

The first 22 residues, 1–22, serve as a signal peptide directing secretion; the sequence is MEKLTFLSLLLHFVVFIASTIP. The propeptide occupies 23-82; it reads SSSFLLNDRTFERSNLPSTRAEKLIRELNLFPQQDLNVIDVADLPLTAAEGPGIVERKFV. Cystine bridges form between cysteine 139/cysteine 379, cysteine 307/cysteine 322, and cysteine 345/cysteine 350. N-linked (GlcNAc...) asparagine glycosylation is present at asparagine 157. The active site involves serine 229. Residue aspartate 417 is part of the active site. A substrate-binding site is contributed by cysteine 420. Histidine 474 is an active-site residue.

It belongs to the peptidase S10 family. Expressed in roots, senescent leaves and flowers.

It is found in the secreted. In terms of biological role, probable carboxypeptidase. This Arabidopsis thaliana (Mouse-ear cress) protein is Serine carboxypeptidase-like 49 (SCPL49).